Here is a 342-residue protein sequence, read N- to C-terminus: Protein-glutamate methylesterase/protein-glutamine glutaminase 2 (342 aa).

Residues 2-119 enclose the Response regulatory domain; the sequence is NIGIVNDLPL…GGSADPSQPL (118 aa). Asp-53 carries the 4-aspartylphosphate modification. Residues 144-337 form the CheB-type methylesterase domain; that stretch reads PAPQGALPPL…DQLISLVQRN (194 aa). Active-site residues include Ser-159, His-186, and Asp-279.

This sequence belongs to the CheB family. Phosphorylated by CheA. Phosphorylation of the N-terminal regulatory domain activates the methylesterase activity.

Its subcellular location is the cytoplasm. It carries out the reaction [protein]-L-glutamate 5-O-methyl ester + H2O = L-glutamyl-[protein] + methanol + H(+). The catalysed reaction is L-glutaminyl-[protein] + H2O = L-glutamyl-[protein] + NH4(+). Its function is as follows. Involved in chemotaxis. Part of a chemotaxis signal transduction system that modulates chemotaxis in response to various stimuli. Catalyzes the demethylation of specific methylglutamate residues introduced into the chemoreceptors (methyl-accepting chemotaxis proteins or MCP) by CheR. Also mediates the irreversible deamidation of specific glutamine residues to glutamic acid. This Burkholderia mallei (strain ATCC 23344) protein is Protein-glutamate methylesterase/protein-glutamine glutaminase 2.